The sequence spans 334 residues: Ornithine carbamoyltransferase (334 aa).

Carbamoyl phosphate is bound by residues 56 to 59 (STRT), Gln83, Arg107, and 134 to 137 (HPTQ). Residues Asn168, Asp232, and 236 to 237 (SM) contribute to the L-ornithine site. Carbamoyl phosphate-binding positions include 274-275 (CL) and Arg320.

Belongs to the aspartate/ornithine carbamoyltransferase superfamily. OTCase family.

Its subcellular location is the cytoplasm. It catalyses the reaction carbamoyl phosphate + L-ornithine = L-citrulline + phosphate + H(+). Its pathway is amino-acid biosynthesis; L-arginine biosynthesis; L-arginine from L-ornithine and carbamoyl phosphate: step 1/3. Functionally, reversibly catalyzes the transfer of the carbamoyl group from carbamoyl phosphate (CP) to the N(epsilon) atom of ornithine (ORN) to produce L-citrulline. This chain is Ornithine carbamoyltransferase, found in Escherichia coli O157:H7.